We begin with the raw amino-acid sequence, 66 residues long: UPF0370 protein CKO_00315 (66 aa).

Residues 4–24 form a helical membrane-spanning segment; it reads LAKYWWILVLVFLVGVLINVI. The interval 39 to 66 is disordered; the sequence is KPELPPHRDFNDKWDDDDDWPKKDQPKK. A compositionally biased stretch (basic and acidic residues) spans 42-51; the sequence is LPPHRDFNDK.

This sequence belongs to the UPF0370 family.

It localises to the cell membrane. The protein is UPF0370 protein CKO_00315 of Citrobacter koseri (strain ATCC BAA-895 / CDC 4225-83 / SGSC4696).